We begin with the raw amino-acid sequence, 224 residues long: Orotate phosphoribosyltransferase (224 aa).

5-phospho-alpha-D-ribose 1-diphosphate-binding positions include K26, 73 to 74 (YK), R100, K101, K104, H106, and 127 to 135 (EDVTTSGKS). 2 residues coordinate orotate: T131 and R160.

This sequence belongs to the purine/pyrimidine phosphoribosyltransferase family. PyrE subfamily. As to quaternary structure, homodimer. Mg(2+) is required as a cofactor.

It catalyses the reaction orotidine 5'-phosphate + diphosphate = orotate + 5-phospho-alpha-D-ribose 1-diphosphate. It functions in the pathway pyrimidine metabolism; UMP biosynthesis via de novo pathway; UMP from orotate: step 1/2. Its function is as follows. Catalyzes the transfer of a ribosyl phosphate group from 5-phosphoribose 1-diphosphate to orotate, leading to the formation of orotidine monophosphate (OMP). This is Orotate phosphoribosyltransferase from Clostridium botulinum (strain Alaska E43 / Type E3).